The sequence spans 486 residues: Betaine aldehyde dehydrogenase (486 aa).

Residues Thr23 and Asp90 each coordinate K(+). 147-149 (GAW) contributes to the NAD(+) binding site. Lys159 functions as the Charge relay system in the catalytic mechanism. Residues 173–176 (KPSE) and 226–229 (ESGT) each bind NAD(+). Leu241 contacts K(+). Residue Glu247 is the Proton acceptor of the active site. The NAD(+) site is built by Gly249, Cys281, and Glu382. Cys281 (nucleophile) is an active-site residue. The residue at position 281 (Cys281) is a Cysteine sulfenic acid (-SOH). Residues Lys452 and Gly455 each contribute to the K(+) site. The Charge relay system role is filled by Glu459.

This sequence belongs to the aldehyde dehydrogenase family. Dimer of dimers. Requires K(+) as cofactor.

It carries out the reaction betaine aldehyde + NAD(+) + H2O = glycine betaine + NADH + 2 H(+). The protein operates within amine and polyamine biosynthesis; betaine biosynthesis via choline pathway; betaine from betaine aldehyde: step 1/1. Involved in the biosynthesis of the osmoprotectant glycine betaine. Catalyzes the irreversible oxidation of betaine aldehyde to the corresponding acid. The sequence is that of Betaine aldehyde dehydrogenase from Vibrio vulnificus (strain YJ016).